The chain runs to 301 residues: Nucleosome assembly protein 1;3 (301 aa).

Residues 15 to 69 (VETLKNKLQALAEQHVDVLESLAPVVRKRVDVLIEIQSQHDELEAKFLEEKSALE) adopt a coiled-coil conformation. A Nuclear export signal motif is present at residues 36–51 (LAPVVRKRVDVLIEIQ). The interval 279 to 301 (EDYGASWVDDEEDDDDEYSDEEA) is disordered. Ser297 carries the phosphoserine; by CK2 modification.

This sequence belongs to the nucleosome assembly protein (NAP) family.

The protein resides in the nucleus. It is found in the cytoplasm. Its function is as follows. May modulate chromatin structure by regulation of nucleosome assembly/disassembly. This Oryza sativa subsp. indica (Rice) protein is Nucleosome assembly protein 1;3 (NAP1;3).